We begin with the raw amino-acid sequence, 195 residues long: MRTLVIASGNAGKIREFQGLLQHLPLNVQAQPQGFDVEETGSTFAANARIKATAVAAMAGSWALADDSGLSVNALGGAPGVHSARYAPTDPERIEKLLGALSNASERHAQFCAALCVAAPDGSVLIEVEGRCDGWITTTPRGDGGFGYDPIFEVSCTGLTFAQMPLTEKKSHGHRGKAFALLEPQLQDLLSAEPR.

A substrate-binding site is contributed by 8–13 (SGNAGK). Mg(2+)-binding residues include glutamate 38 and aspartate 67. The active-site Proton acceptor is the aspartate 67. Substrate-binding positions include serine 68, 146 to 149 (FGYD), lysine 169, and 174 to 175 (HR).

The protein belongs to the HAM1 NTPase family. Homodimer. The cofactor is Mg(2+).

The enzyme catalyses XTP + H2O = XMP + diphosphate + H(+). It carries out the reaction dITP + H2O = dIMP + diphosphate + H(+). The catalysed reaction is ITP + H2O = IMP + diphosphate + H(+). Pyrophosphatase that catalyzes the hydrolysis of nucleoside triphosphates to their monophosphate derivatives, with a high preference for the non-canonical purine nucleotides XTP (xanthosine triphosphate), dITP (deoxyinosine triphosphate) and ITP. Seems to function as a house-cleaning enzyme that removes non-canonical purine nucleotides from the nucleotide pool, thus preventing their incorporation into DNA/RNA and avoiding chromosomal lesions. This is dITP/XTP pyrophosphatase from Parasynechococcus marenigrum (strain WH8102).